The sequence spans 67 residues: DNA-directed RNA polymerase subunit omega (67 aa).

Belongs to the RNA polymerase subunit omega family. In terms of assembly, the RNAP catalytic core consists of 2 alpha, 1 beta, 1 beta' and 1 omega subunit. When a sigma factor is associated with the core the holoenzyme is formed, which can initiate transcription.

It catalyses the reaction RNA(n) + a ribonucleoside 5'-triphosphate = RNA(n+1) + diphosphate. Its function is as follows. Promotes RNA polymerase assembly. Latches the N- and C-terminal regions of the beta' subunit thereby facilitating its interaction with the beta and alpha subunits. The chain is DNA-directed RNA polymerase subunit omega from Listeria monocytogenes serotype 4b (strain F2365).